The sequence spans 170 residues: Thialysine N-epsilon-acetyltransferase (170 aa).

The N-acetyltransferase domain occupies 4–166; the sequence is VLIREAKEGD…FRFEGEAMRE (163 aa). 27 to 28 serves as a coordination point for substrate; sequence YE. K29 bears the N6-acetyllysine mark. E92 contributes to the substrate binding site. Residues 94–96, 102–107, 133–135, and Y140 contribute to the acetyl-CoA site; these read IYV, GQGIGS, and NKK. Residue Y140 is the Proton donor of the active site. E152 is a substrate binding site.

The protein belongs to the acetyltransferase family. In terms of assembly, homodimer.

It localises to the cytoplasm. The catalysed reaction is S-(2-aminoethyl)-L-cysteine + acetyl-CoA = S-(2-acetamidoethyl)-L-cysteine + CoA + H(+). It catalyses the reaction an alkane-alpha,omega-diamine + acetyl-CoA = an N-acetylalkane-alpha,omega-diamine + CoA + H(+). In terms of biological role, catalyzes the N-acetylation of the amino acid thialysine (S-(2-aminoethyl)-L-cysteine), a L-lysine analog with the 4-methylene group substituted with a sulfur. May also catalyze acetylation of polyamines, such as norspermidine, spermidine or spermine. However, ability to acetylate polyamines is weak, suggesting that it does not act as a diamine acetyltransferase in vivo. The polypeptide is Thialysine N-epsilon-acetyltransferase (Sus scrofa (Pig)).